We begin with the raw amino-acid sequence, 93 residues long: Pyrimidine/purine nucleoside phosphorylase (93 aa).

The protein belongs to the nucleoside phosphorylase PpnP family.

The enzyme catalyses a purine D-ribonucleoside + phosphate = a purine nucleobase + alpha-D-ribose 1-phosphate. It carries out the reaction adenosine + phosphate = alpha-D-ribose 1-phosphate + adenine. The catalysed reaction is cytidine + phosphate = cytosine + alpha-D-ribose 1-phosphate. It catalyses the reaction guanosine + phosphate = alpha-D-ribose 1-phosphate + guanine. The enzyme catalyses inosine + phosphate = alpha-D-ribose 1-phosphate + hypoxanthine. It carries out the reaction thymidine + phosphate = 2-deoxy-alpha-D-ribose 1-phosphate + thymine. The catalysed reaction is uridine + phosphate = alpha-D-ribose 1-phosphate + uracil. It catalyses the reaction xanthosine + phosphate = alpha-D-ribose 1-phosphate + xanthine. Functionally, catalyzes the phosphorolysis of diverse nucleosides, yielding D-ribose 1-phosphate and the respective free bases. Can use uridine, adenosine, guanosine, cytidine, thymidine, inosine and xanthosine as substrates. Also catalyzes the reverse reactions. The polypeptide is Pyrimidine/purine nucleoside phosphorylase (Sorangium cellulosum (strain So ce56) (Polyangium cellulosum (strain So ce56))).